Reading from the N-terminus, the 478-residue chain is Lysine histidine transporter-like 7 (478 aa).

At 1–63 the chain is on the cytoplasmic side; sequence MSIALGNLFD…ITESRKGNVY (63 aa). The disordered stretch occupies residues 15-45; it reads ESGGSPLFMSPAPSTDPQPISGEKNGGDGGR. Residues 64-86 traverse the membrane as a helical segment; it reads TATFHLLCSGIGLQVILLPAAFA. Over 87–89 the chain is Extracellular; it reads ALG. A helical transmembrane segment spans residues 90–112; the sequence is WVWGTIILTVGFVWKLYTTWLLV. The Cytoplasmic portion of the chain corresponds to 113–140; sequence QLHEAVPGIRISRYVRLAIASFGVKLGK. The chain crosses the membrane as a helical span at residues 141 to 161; sequence LLGIFPVMYLSGGACTILVIT. Topologically, residues 162 to 177 are extracellular; sequence GGKSIQQLLQIMSDDN. Residues 178-198 form a helical membrane-spanning segment; it reads TAPLTSVQCFLVFSCIAMIMS. The Cytoplasmic segment spans residues 199–205; the sequence is QFPNLNS. The helical transmembrane segment at 206 to 226 threads the bilayer; it reads LFGVSLIGAFMGIAYCTVIWI. Residues 227 to 241 are Extracellular-facing; it reads LPVASDSQRTQVSVS. The helical transmembrane segment at 242–262 threads the bilayer; it reads YATMDKSFVHIFNAIGLIALV. Residues 263–291 lie on the Cytoplasmic side of the membrane; the sequence is YRGNNLVLEIQGTLPSDSKNPSCKTMWRA. Residues 292–312 form a helical membrane-spanning segment; that stretch reads VMISHALVAICMFPLTFAVYW. Over 313-340 the chain is Extracellular; that stretch reads AYGDKIPATGGPVGNYLKLYTQEHSKRA. The helical transmembrane segment at 341–361 threads the bilayer; sequence ACFIHLTFIFSCLCSYPINLM. Over 362–379 the chain is Cytoplasmic; the sequence is PACDNIEMVYITKKKKPA. The chain crosses the membrane as a helical span at residues 380-402; it reads SIIVRMMLRVFLSLVCFTIAVGF. At 403–406 the chain is on the extracellular side; the sequence is PFLP. The helical transmembrane segment at 407-429 threads the bilayer; it reads YLAVLIGAIALLVTFTYPCFMWI. Topologically, residues 430–439 are cytoplasmic; sequence SIKKPQRKSP. Residues 440-460 traverse the membrane as a helical segment; the sequence is MWLFNVLVGCLGASLSVLLLV. The Extracellular segment spans residues 461-478; the sequence is ASAMRLAQKGLHANFFRP.

The protein belongs to the amino acid/polyamine transporter 2 family. Amino acid/auxin permease (AAAP) (TC 2.A.18.2) subfamily.

It localises to the cell membrane. Its function is as follows. Amino acid transporter. The polypeptide is Lysine histidine transporter-like 7 (Arabidopsis thaliana (Mouse-ear cress)).